The following is an 807-amino-acid chain: FAD-linked oxidoreductase pytB (807 aa).

Positions 1 to 18 (MRFLGIAAVATFSTVVSA) are cleaved as a signal peptide. Residues Asn45, Asn106, Asn120, Asn242, Asn295, Asn351, Asn419, and Asn699 are each glycosylated (N-linked (GlcNAc...) asparagine). The FAD-binding PCMH-type domain maps to 60 to 231 (FDELPVLLAY…VEFTLSLTSI (172 aa)).

Belongs to the oxygen-dependent FAD-linked oxidoreductase family. FAD is required as a cofactor.

It participates in secondary metabolite biosynthesis. Functionally, FAD-linked oxidoreductase; part of the gene cluster that mediates the biosynthesis of pyranterreones, a family of antioxidative compounds. The first step of pyranonigrins biosynthesis is performed by the hybrid PKS-NRPS synthetase pytA that condenses 4 malonyl-CoA units ato the acetyl starter unit by the modular PKS of pytA. The acyl chain is then connected to an L-serine through the amide bond by the modular NRPS of pytA. A tetramic acid is formed and released from the PKS-NRPS pytA to give pyranterreone 5 with the help of the thioesterase pytI. Pyranterreone 5 could be methylated by pytC to afford pyranterreone 6. Both pyranterreones 5 and 6 are subsequently oxidized by the FAD-linked oxidoreductase pytB and the cytochrome P450 monooxygenase pytD to form the fused gamma-pyrone core, resulting in pyranterreones 7 and 11, respectively. The hydroxy group at C-8 of pyranterreones 7 and 11 are dehydrated by the aspartyl protease pytH to form a delta-7 double bond to give pyranterreones 3 and 1, 2 accordingly. The exo-methylene of pyranterreone 3 could be reduced into a pendant methyl by reductase pytE to provide pyranterreone 4, also known as cordylactam. Pyranterreone 4 can be reconverted to pyranterreone 3 through pytB-catalyzed dehydrogenation or further oxidized to pyranterreones 9 and 10. The chain is FAD-linked oxidoreductase pytB from Aspergillus terreus (strain NIH 2624 / FGSC A1156).